The chain runs to 437 residues: Dolichyl-diphosphooligosaccharide--protein glycosyltransferase 48 kDa subunit (437 aa).

The signal sequence occupies residues 1 to 24; sequence MVNLSRSVALISVFLLPLLSFSFS. The Lumenal portion of the chain corresponds to 25–414; that stretch reads VDNPTDRRVL…YERFIPTAYP (390 aa). A helical membrane pass occupies residues 415-435; the sequence is YYGACFTTMAGFFVFSFVYLY. Topologically, residues 436–437 are cytoplasmic; that stretch reads HK.

This sequence belongs to the DDOST 48 kDa subunit family. Component of the oligosaccharyltransferase (OST) complex.

It is found in the endoplasmic reticulum membrane. Its pathway is protein modification; protein glycosylation. Functionally, subunit of the oligosaccharyl transferase (OST) complex that catalyzes the initial transfer of a defined glycan (Glc(3)Man(9)GlcNAc(2) in eukaryotes) from the lipid carrier dolichol-pyrophosphate to an asparagine residue within an Asn-X-Ser/Thr consensus motif in nascent polypeptide chains, the first step in protein N-glycosylation. N-glycosylation occurs cotranslationally and the complex associates with the Sec61 complex at the channel-forming translocon complex that mediates protein translocation across the endoplasmic reticulum (ER). All subunits are required for a maximal enzyme activity. This Arabidopsis thaliana (Mouse-ear cress) protein is Dolichyl-diphosphooligosaccharide--protein glycosyltransferase 48 kDa subunit (OST48).